Reading from the N-terminus, the 1533-residue chain is Maternal protein pumilio (1533 aa).

4 disordered regions span residues 102–149, 207–276, 304–331, and 382–452; these read ACGD…TIGM, AAAV…QQHP, YDHH…PGAG, and WEKS…AGIL. Residues 103 to 117 show a composition bias toward basic and acidic residues; that stretch reads CGDDGHGIDNPDKWK. The segment covering 133 to 149 has biased composition (gly residues); sequence PGNGSNGGPGAIGTIGM. The segment covering 207-237 has biased composition (low complexity); the sequence is AAAVAAQQQHQHPHQQHPQQQQQQQQAQNQG. Gly residues predominate over residues 243 to 255; the sequence is MGGGNGLGNGNGL. Low complexity predominate over residues 256 to 276; it reads GIQHPGQQQQQQQQQQQQQHP. Phosphoserine is present on residues S453, S468, S470, and S477. Residues 470–479 show a composition bias toward polar residues; it reads SPTNKDSSLS. 4 disordered regions span residues 470-558, 697-725, 846-912, and 975-1008; these read SPTN…NLLF, VGAP…QQQQ, VLVP…AFSP, and LGAP…QQQQ. Positions 483–503 are enriched in basic and acidic residues; that stretch reads PHLRNLKFDDNDKSRDDKEKA. S505 is subject to Phosphoserine. Positions 863-875 are enriched in low complexity; it reads PQLYQPQPQTAQQ. The PUM-HD domain occupies 1091–1428; that stretch reads GRSRLLEDFR…HINAKLEKYY (338 aa). 8 Pumilio repeats span residues 1111 to 1146, 1147 to 1182, 1183 to 1218, 1219 to 1254, 1255 to 1290, 1291 to 1326, 1327 to 1362, and 1366 to 1402; these read DLAN…MVFS, EILA…TLGM, QVKG…EIVH, ELDG…FIIN, AFKG…PILD, ELHE…ILIN, SVRG…GLID, and TFND…KLMT. An adenine-nucleotide binding in RNA target region spans residues 1126 to 1130; the sequence is SRFIQ. The uracil-nucleotide binding in RNA target stretch occupies residues 1162–1166; it reads NYVIQ. An adenine-nucleotide binding in RNA target region spans residues 1198–1202; sequence CRVIQ. The segment at 1234–1238 is non-specific-nucleotide binding in RNA target; the sequence is NHVVQ. Residues 1270–1274 form an adenine-nucleotide binding in RNA target region; the sequence is CRVIQ. Positions 1306-1310 are uracil-nucleotide binding in RNA target; the sequence is NYVIQ. A guanine-nucleotide binding in RNA target region spans residues 1342-1346; that stretch reads SNVVE. Residues 1382–1386 form a uracil-nucleotide binding in RNA target region; the sequence is NYVVQ. The tract at residues 1494-1533 is disordered; it reads AMVVEPSSPDASESSSSVVSGAVNSSLGPIGPPTNGNVVL. Over residues 1496-1519 the composition is skewed to low complexity; the sequence is VVEPSSPDASESSSSVVSGAVNSS.

As to quaternary structure, interacts with nanos (nos) and brat. Acts via the formation of a quaternary complex composed of pum, nanos, brat and the 3'-UTR mRNA of hb.

It is found in the cytoplasm. The protein localises to the cytoplasmic ribonucleoprotein granule. Functionally, sequence-specific RNA-binding protein that acts as a post-transcriptional repressor by binding the 3'-UTR of mRNA targets. Binds to an RNA consensus sequence, the Pumilio Response Element (PRE), 5'-UGUANAUA-3', that is related to the Nanos Response Element (NRE). Mediates post-transcriptional repression of transcripts via different mechanisms: acts via direct recruitment of deadenylase complexes leading to translational inhibition and mRNA degradation. Also mediates deadenylation-independent repression by promoting accessibility of miRNAs. Mediates post-transcriptional silencing of E2f mRNA by binding to its 3'-UTR and promoting miRNA regulation. Required for abdominal development and to support proliferation and self-renewal of germ cells. Pum is the only gene required for nanos (nos) activity that is not also required for posterior localization of germline determinants. Pum is required during embryogenesis when nanos activity apparently moves anteriorly from the posterior pole. This is Maternal protein pumilio (pum) from Drosophila melanogaster (Fruit fly).